The chain runs to 461 residues: MKKDTRKYMIYFFGALGGLLYGYDTGVISGALLFINNDIPLTTLTEGLVVSMLLLGAIFGSALSGTCSDRWGRRKVVFVLSIIFIIGALACAFSQTIGMLIASRVILGLAVGGSTALVPVYLSEMAPTKIRGTLGTMNNLMIVTGILLAYIVNYLFTPFEAWRWMVGLAAVPAVLLLIGIAFMPESPRWLVKRGSEEEARRIMNITHDPKDIEMELAEMKQGEAEKKETTLGVLKAKWIRPMLLIGVGLAIFQQAVGINTVIYYAPTIFTKAGLGTSASALGTMGIGILNVIMCITAMILIDRVGRKKLLIWGSVGITLSLAALSGVLLTLGLSASTAWMTVVFLGVYIVFYQATWGPVVWVLMPELFPSKARGAATGFTTLVLSAANLIVSLVFPLMLSAMGIAWVFMVFSVICLLSFFFAFYMVPETKGKSLEEIEASLKKRFKKKKSTQNQVLNERTL.

The Cytoplasmic portion of the chain corresponds to Met1–Gly14. A helical membrane pass occupies residues Ala15–Ile35. Residues Asn36–Asp38 are Extracellular-facing. The helical transmembrane segment at Ile39 to Phe59 threads the bilayer. The Cytoplasmic segment spans residues Gly60–Val76. The helical transmembrane segment at Val77–Ile97 threads the bilayer. The Extracellular portion of the chain corresponds to Gly98–Arg104. A helical transmembrane segment spans residues Val105–Met125. Residues Ala126–Asn139 lie on the Cytoplasmic side of the membrane. The helical transmembrane segment at Leu140 to Glu160 threads the bilayer. Over Ala161–Arg163 the chain is Extracellular. The helical transmembrane segment at Trp164 to Pro184 threads the bilayer. The Cytoplasmic portion of the chain corresponds to Glu185–Pro241. Residues Met242–Ile262 form a helical membrane-spanning segment. Topologically, residues Tyr263–Ala280 are extracellular. A helical membrane pass occupies residues Leu281–Ile301. The Cytoplasmic segment spans residues Asp302 to Lys308. A helical membrane pass occupies residues Leu309–Leu329. Over Thr330–Thr341 the chain is Extracellular. A helical transmembrane segment spans residues Val342–Val362. Residues Leu363 to Gly378 are Cytoplasmic-facing. Residues Phe379–Leu399 form a helical membrane-spanning segment. Residues Ser400–Met402 lie on the Extracellular side of the membrane. Residues Gly403 to Phe423 traverse the membrane as a helical segment. Topologically, residues Tyr424–Leu461 are cytoplasmic.

The protein belongs to the major facilitator superfamily. Sugar transporter (TC 2.A.1.1) family.

The protein localises to the cell membrane. Its function is as follows. Could serve either a nutritional or an osmotic protection function. The protein is Probable metabolite transport protein CsbC (csbC) of Bacillus subtilis (strain 168).